A 195-amino-acid chain; its full sequence is Apoptosis-associated speck-like protein containing a CARD (195 aa).

The 91-residue stretch at 1-91 (MGRARDAILD…AGQLQAATHQ (91 aa)) folds into the Pyrin domain. Residues Lys-55 and Lys-174 each participate in a glycyl lysine isopeptide (Lys-Gly) (interchain with G-Cter in ubiquitin) cross-link. Residues 107–195 (AAKPGLHFID…SYLVEDLERS (89 aa)) form the CARD domain. At Ser-195 the chain carries Phosphoserine.

In terms of assembly, self-associates; enforced oligomerization induces apoptosis, NF-kappa-B regulation and interleukin-1 beta secretion. Homooligomers can form disk-like particles of approximately 12 nm diameter and approximately 1 nm height. Next to isoform 1, also isoform 2 and isoform 3 may be involved in oligomerization leading to functional regulation. Component of several inflammasomes containing one pattern recognition receptor/sensor, such as NLRP1, NLRP2, NLRP3, NLRP6, NLRC4, AIM2, MEFV or NOD2, and probably NLRC4, NLRP12 or IFI16. Major component of the ASC pyroptosome, a 1-2 um supramolecular assembly (one per macrophage cell) which consists of oligomerized PYCARD dimers and CASP1. Interacts with CASP1 (precursor form); the interaction induces activation of CASP1 leading to the processing of interleukin-1 beta; PYCARD competes with RIPK2 for binding to CASP1. Interacts with NLRP3; the interaction requires the homooligomerization of NLRP3. Interacts with NLRP2, NLRC4, MEFV, CARD16, AIM2, IFI16, NOD2, RIGI, RIPK2, PYDC1, PYDC2, NLRP10, CASP8, CHUK, IKBKB and BAX. Component of the AIM2 PANoptosome complex, a multiprotein complex that drives inflammatory cell death (PANoptosis). Phosphorylated. Post-translationally, 'Lys-63'-linked polyubiquitination by TRAF3 is critical for speck formation and inflammasome activation. 'Lys-63'-linked deubiquitinated by USP50; a crucial step for NLRP3-mediated inflammasome activation. 'Lys-63'-linked polyubiquitination by PELI1 is also critical for speck formation and inflammasome activation. Deubiquitinated by USP3 that cleaves 'Lys-48'-linked ubiquitin chains and strengthens its stability by blocking proteasomal degradation. Widely expressed at low levels. Detected in peripheral blood leukocytes, lung, small intestine, spleen, thymus, colon and at lower levels in placenta, liver and kidney. Very low expression in skeletal muscle, heart and brain. Expressed in lung epithelial cells (at protein level). Detected in the leukemia cell lines HL-60 and U-937, but not in Jurkat T-cell lymphoma and Daudi Burkitt's lymphoma. Detected in the melanoma cell line WM35, but not in WM793. Not detected in HeLa cervical carcinoma cells and MOLT-4 lymphocytic leukemia cells.

The protein resides in the cytoplasm. The protein localises to the inflammasome. Its subcellular location is the endoplasmic reticulum. It is found in the mitochondrion. It localises to the nucleus. The protein resides in the golgi apparatus membrane. Functions as a key mediator in apoptosis and inflammation. Promotes caspase-mediated apoptosis involving predominantly caspase-8 and also caspase-9 in a probable cell type-specific manner. Involved in activation of the mitochondrial apoptotic pathway, promotes caspase-8-dependent proteolytic maturation of BID independently of FADD in certain cell types and also mediates mitochondrial translocation of BAX and activates BAX-dependent apoptosis coupled to activation of caspase-9, -2 and -3. Involved in innate immune response by acting as an integral adapter in the assembly of various inflammasomes (NLRP1, NLRP2, NLRP3, NLRP6, AIM2 and probably IFI16) which recruit and activate caspase-1 leading to processing and secretion of pro-inflammatory cytokines. Caspase-1-dependent inflammation leads to macrophage pyroptosis, a form of cell death. The function as activating adapter in different types of inflammasomes is mediated by the pyrin and CARD domains and their homotypic interactions. Clustered PYCARD nucleates the formation of caspase-1 filaments through the interaction of their respective CARD domains, acting as a platform for of caspase-1 polymerization. In the NLRP1 and NLRC4 inflammasomes seems not be required but facilitates the processing of procaspase-1. In cooperation with NOD2 involved in an inflammasome activated by bacterial muramyl dipeptide leading to caspase-1 activation. May be involved in RIGI-triggered pro-inflammatory responses and inflammasome activation. In collaboration with AIM2 which detects cytosolic double-stranded DNA may also be involved in a caspase-1-independent cell death that involves caspase-8. In adaptive immunity may be involved in maturation of dendritic cells to stimulate T-cell immunity and in cytoskeletal rearrangements coupled to chemotaxis and antigen uptake may be involved in post-transcriptional regulation of the guanine nucleotide exchange factor DOCK2; the latter function is proposed to involve the nuclear form. Also involved in transcriptional activation of cytokines and chemokines independent of the inflammasome; this function may involve AP-1, NF-kappa-B, MAPK and caspase-8 signaling pathways. For regulation of NF-kappa-B activating and inhibiting functions have been reported. Modulates NF-kappa-B induction at the level of the IKK complex by inhibiting kinase activity of CHUK and IKBK. Proposed to compete with RIPK2 for association with CASP1 thereby down-regulating CASP1-mediated RIPK2-dependent NF-kappa-B activation and activating interleukin-1 beta processing. Modulates host resistance to DNA virus infection, probably by inducing the cleavage of and inactivating CGAS in presence of cytoplasmic double-stranded DNA. Functionally, may have a regulating effect on the function as inflammasome adapter. Its function is as follows. Seems to inhibit inflammasome-mediated maturation of interleukin-1 beta. This is Apoptosis-associated speck-like protein containing a CARD from Homo sapiens (Human).